The following is a 399-amino-acid chain: Lymphoid enhancer-binding factor 1 (399 aa).

Residues 1-14 (MPQLSGGGGGGGGD) are compositionally biased toward gly residues. The interval 1-62 (MPQLSGGGGG…IKSSLVNESE (62 aa)) is CTNNB1-binding. The segment at 1-104 (MPQLSGGGGG…KHPDGGLYNK (104 aa)) is disordered. 2 stretches are compositionally biased toward basic and acidic residues: residues 24–45 (IPFK…SHPE) and 82–98 (PYHD…KHPD). Residue K27 forms a Glycyl lysine isopeptide (Lys-Gly) (interchain with G-Cter in SUMO) linkage. S132 bears the Phosphoserine mark. T155 is modified (phosphothreonine; by NLK). Phosphoserine; by NLK is present on S166. 2 disordered regions span residues 166–192 (SPGS…PAPD) and 268–298 (VKQE…KRPH). K269 participates in a covalent cross-link: Glycyl lysine isopeptide (Lys-Gly) (interchain with G-Cter in SUMO). Basic and acidic residues predominate over residues 269-296 (KQEHPHTDSDLMHVKPQHEQRKEQEPKR). Residues 299 to 367 (IKKPLNAFML…LHMQLYPGWS (69 aa)) constitute a DNA-binding region (HMG box). The disordered stretch occupies residues 369–399 (RDNYGKKKKRKREKLQESASGTGPRMTAAYI).

This sequence belongs to the TCF/LEF family. As to quaternary structure, binds the armadillo repeat of CTNNB1 and forms a stable complex. Interacts with EP300, TLE1 and PIASG. Binds ALYREF/THOC4, MDFI and MDFIC. Interacts with NLK. Interacts with DAZAP2. Post-translationally, phosphorylated at Thr-155 and/or Ser-166 by NLK. Phosphorylation by NLK at these sites represses LEF1-mediated transcriptional activation of target genes of the canonical Wnt signaling pathway. In terms of tissue distribution, detected in thymus. Not detected in normal colon, but highly expressed in colon cancer biopsies and colon cancer cell lines. Expressed in several pancreatic tumors and weakly expressed in normal pancreatic tissue. Isoforms 1 and 5 are detected in several pancreatic cell lines.

It is found in the nucleus. Its function is as follows. Transcription factor that binds DNA in a sequence-specific manner. Participates in the Wnt signaling pathway. Activates transcription of target genes in the presence of CTNNB1 and EP300. PIAG antagonizes both Wnt-dependent and Wnt-independent activation by LEF1. TLE1, TLE2, TLE3 and TLE4 repress transactivation mediated by LEF1 and CTNNB1. Regulates T-cell receptor alpha enhancer function. Required for IL17A expressing gamma-delta T-cell maturation and development, via binding to regulator loci of BLK to modulate expression. Acts as a positive regulator of odontoblast differentiation during mesenchymal tooth germ formation, expression is repressed during the bell stage by MSX1-mediated inhibition of CTNNB1 signaling. May play a role in hair cell differentiation and follicle morphogenesis. Functionally, transcriptionally activates MYC and CCND1 expression and enhances proliferation of pancreatic tumor cells. Lacks the CTNNB1 interaction domain and may therefore be an antagonist for Wnt signaling. In terms of biological role, transcriptionally activates the fibronectin promoter, binds to and represses transcription from the E-cadherin promoter in a CTNNB1-independent manner, and is involved in reducing cellular aggregation and increasing cell migration of pancreatic cancer cells. The sequence is that of Lymphoid enhancer-binding factor 1 from Homo sapiens (Human).